The sequence spans 957 residues: Glycine dehydrogenase (decarboxylating) (957 aa).

Lys708 bears the N6-(pyridoxal phosphate)lysine mark.

This sequence belongs to the GcvP family. The glycine cleavage system is composed of four proteins: P, T, L and H. Requires pyridoxal 5'-phosphate as cofactor.

It carries out the reaction N(6)-[(R)-lipoyl]-L-lysyl-[glycine-cleavage complex H protein] + glycine + H(+) = N(6)-[(R)-S(8)-aminomethyldihydrolipoyl]-L-lysyl-[glycine-cleavage complex H protein] + CO2. Its function is as follows. The glycine cleavage system catalyzes the degradation of glycine. The P protein binds the alpha-amino group of glycine through its pyridoxal phosphate cofactor; CO(2) is released and the remaining methylamine moiety is then transferred to the lipoamide cofactor of the H protein. The sequence is that of Glycine dehydrogenase (decarboxylating) from Escherichia coli O6:H1 (strain CFT073 / ATCC 700928 / UPEC).